Reading from the N-terminus, the 1084-residue chain is Cellulose synthase A catalytic subunit 2 [UDP-forming] (1084 aa).

M1 carries the post-translational modification N-acetylmethionine. Residues 1 to 278 (MNTGGRLIAG…RSSRINPYRM (278 aa)) are Cytoplasmic-facing. Zn(2+)-binding residues include C39, C42, C58, C61, C66, C69, C81, and C84. Residues 39–85 (CQICGDEIELTVSSELFVACNECAFPVCRPCYEYERREGNQACPQCK) form an RING-type; degenerate zinc finger. The tract at residues 230–259 (IKHEGGNNGRGSNDDDELDDPDMPMMDEGR) is disordered. The chain crosses the membrane as a helical span at residues 279 to 299 (LILCRLAILGLFFHYRILHPV). The Extracellular portion of the chain corresponds to 300–301 (ND). A helical transmembrane segment spans residues 302-322 (AYGLWLTSVICEIWFAVSWIL). Residues 323–867 (DQFPKWYPIE…INSVVYPWTS (545 aa)) are Cytoplasmic-facing. The UDP-alpha-D-glucose site is built by S361, K367, E368, and D397. D397 is an active-site residue. A coiled-coil region spans residues 451-477 (VRERRAMKRDYEEFKVKINALVATAQK). A UDP-alpha-D-glucose-binding site is contributed by K538. Residues K539 and D563 each coordinate Mn(2+). Residue D784 is part of the active site. A helical transmembrane segment spans residues 868–888 (LPLIVYCSLPAVCLLTGKFIV). The Extracellular segment spans residues 889–893 (PEISN). A helical transmembrane segment spans residues 894-914 (YAGILFMLMFISIAVTGILEM). The Cytoplasmic portion of the chain corresponds to 915 to 929 (QWGGVGIDDWWRNEQ). The helical transmembrane segment at 930-950 (FWVIGGASSHLFALFQGLLKV) threads the bilayer. The Extracellular portion of the chain corresponds to 951-979 (LAGVNTNFTVTSKAADDGAFSELYIFKWT). N-linked (GlcNAc...) asparagine glycosylation occurs at N957. A helical transmembrane segment spans residues 980–1000 (TLLIPPTTLLIINIIGVIVGV). Topologically, residues 1001-1011 (SDAISNGYDSW) are cytoplasmic. A helical transmembrane segment spans residues 1012 to 1032 (GPLFGRLFFALWVIVHLYPFL). Residues 1033 to 1041 (KGMLGKQDK) lie on the Extracellular side of the membrane. Residues 1042–1062 (MPTIIVVWSILLASILTLLWV) traverse the membrane as a helical segment. Over 1063–1084 (RVNPFVAKGGPVLEICGLNCGN) the chain is Cytoplasmic.

This sequence belongs to the glycosyltransferase 2 family. Plant cellulose synthase subfamily. In terms of assembly, homodimer. Interaction through zinc finger domain. Mn(2+) serves as cofactor. Requires Zn(2+) as cofactor. In terms of tissue distribution, strongly and ubiquitously expressed. Localized in some dividing and expanding cells, as well as in vascular tissues.

It localises to the cell membrane. It catalyses the reaction [(1-&gt;4)-beta-D-glucosyl](n) + UDP-alpha-D-glucose = [(1-&gt;4)-beta-D-glucosyl](n+1) + UDP + H(+). It functions in the pathway glycan metabolism; plant cellulose biosynthesis. Its function is as follows. Catalytic subunit of cellulose synthase terminal complexes ('rosettes'), required for beta-1,4-glucan microfibril crystallization, a major mechanism of the cell wall formation. Involved in the primary cell wall formation. This chain is Cellulose synthase A catalytic subunit 2 [UDP-forming], found in Arabidopsis thaliana (Mouse-ear cress).